The sequence spans 260 residues: Trans-aconitate 2-methyltransferase (260 aa).

Belongs to the methyltransferase superfamily. Tam family.

The protein localises to the cytoplasm. The catalysed reaction is trans-aconitate + S-adenosyl-L-methionine = (E)-3-(methoxycarbonyl)pent-2-enedioate + S-adenosyl-L-homocysteine. Its function is as follows. Catalyzes the S-adenosylmethionine monomethyl esterification of trans-aconitate. This is Trans-aconitate 2-methyltransferase from Paracidovorax citrulli (strain AAC00-1) (Acidovorax citrulli).